The sequence spans 154 residues: MSELCPCGSILNYHECCGPYILGTQVAAKPAILMRSRYCAYVEKNVDYLIATWHPDCHAQEWRESIIQGFTKTVWHGLTVIADTPGRHPDEAFVEFIARFTDADNAQITAMHERSRFLRIKEHWYYIDGIRPSLGRNDTCLCGSGKKHKKCCGR.

The protein belongs to the UPF0225 family.

The polypeptide is UPF0225 protein YpsIP31758_1970 (Yersinia pseudotuberculosis serotype O:1b (strain IP 31758)).